The chain runs to 643 residues: MNANPKFLSADAHVDAAAVAPLPNSRKVYVTGSQPDIRVPMREITQADTPTGFGGEKNPPIYVYDTSGPYTDPDAKIDIRAGLPALRQGWIEARGDTEVLDGLSSQYGLERAADPATADLRFPGLHRNPRRAQPGKNVTQMHYARQGIITPEMEYIAIRENQRRAEYIESLKSSGPNGAKLAAMMGRQHPGQAFGAAAFGANALAEITPEFVRDEIARGRAIIPANINHPESEPMIIGRNFLVKINANIGNSAVTSSIGEEVDKMTWAIRWGGDTVMDLSTGKHIHETREWIIRNSPVPIGTVPIYQALEKVNGKAEDLTWEIFRDTLIEQAEQGVDYFTIHAGVRLQYVPLTANRMTGIVSRGGSIMAKWCLAHHKESFLYEHFEEICEIMKAYDVSFSLGDGLRPGSIYDANDEAQLGELKTLGELTQIAWKHDVQVMIEGPGHVPMQLIKENMDLQLDWCKEAPFYTLGPLTTDIAPGYDHITSGIGAAMIGWFGTAMLCYVTPKEHLGLPNKDDVKEGIITYKLAAHAADLAKGHPGAQVRDNALSKARFEFRWEDQFNIGLDPDKAREFHDETLPKDSAKVAHFCSMCGPHFCSMKITQDVREFAAQQGVSETEALKKGMEVKAVEFVKTGAEIYHRQ.

Residues N248, M277, Y306, H342, 362-364 (SRG), 403-406 (DGLR), and E442 each bind substrate. Position 446 (H446) interacts with Zn(2+). Y469 provides a ligand contact to substrate. A Zn(2+)-binding site is contributed by H510. Residues C590, C593, and C598 each coordinate [4Fe-4S] cluster.

Belongs to the ThiC family. As to quaternary structure, homodimer. [4Fe-4S] cluster is required as a cofactor.

It carries out the reaction 5-amino-1-(5-phospho-beta-D-ribosyl)imidazole + S-adenosyl-L-methionine = 4-amino-2-methyl-5-(phosphooxymethyl)pyrimidine + CO + 5'-deoxyadenosine + formate + L-methionine + 3 H(+). It participates in cofactor biosynthesis; thiamine diphosphate biosynthesis. Its function is as follows. Catalyzes the synthesis of the hydroxymethylpyrimidine phosphate (HMP-P) moiety of thiamine from aminoimidazole ribotide (AIR) in a radical S-adenosyl-L-methionine (SAM)-dependent reaction. The polypeptide is Phosphomethylpyrimidine synthase (Burkholderia ambifaria (strain ATCC BAA-244 / DSM 16087 / CCUG 44356 / LMG 19182 / AMMD) (Burkholderia cepacia (strain AMMD))).